Reading from the N-terminus, the 211-residue chain is ATP phosphoribosyltransferase (211 aa).

The protein belongs to the ATP phosphoribosyltransferase family. Short subfamily. Heteromultimer composed of HisG and HisZ subunits.

The protein localises to the cytoplasm. The catalysed reaction is 1-(5-phospho-beta-D-ribosyl)-ATP + diphosphate = 5-phospho-alpha-D-ribose 1-diphosphate + ATP. It participates in amino-acid biosynthesis; L-histidine biosynthesis; L-histidine from 5-phospho-alpha-D-ribose 1-diphosphate: step 1/9. Its function is as follows. Catalyzes the condensation of ATP and 5-phosphoribose 1-diphosphate to form N'-(5'-phosphoribosyl)-ATP (PR-ATP). Has a crucial role in the pathway because the rate of histidine biosynthesis seems to be controlled primarily by regulation of HisG enzymatic activity. In Pseudomonas putida (strain GB-1), this protein is ATP phosphoribosyltransferase.